We begin with the raw amino-acid sequence, 355 residues long: MAITKYKAAAVTSEPGWFDLEGGVRKTIDFINEAGEAGCKFVAFPEVWIPGYPYWMWKVTYLQSLPMLKRYRENSMAVDSEEMRRIRRAARDNQIFVSLGFSEIDHATLYLSQVLIGPDGAVINHRRKIKPTHVEKLVYGDGSGDTFMSVSETEIGRVGQLNCWENMNPFLKSLNVSAGEQVHVAAWPVYPGKERQVHPDPATNYADPASDLVTPEYAIETGTWTLAPFQRLSVEGLKINTPEGVEPETDPSVYNGHARIYRPDGSLVVKPEKDFDGLLFVDIDLNECHLTKVLADFAGHYMRPDLIRLLVDTRRKKLITEADPNGSIATYSTRQRLGLDKPLSKKEGDETTDVL.

The region spanning 6–286 is the CN hydrolase domain; that stretch reads YKAAAVTSEP…GLLFVDIDLN (281 aa). The active-site Proton acceptor is the E46. Residue K128 is part of the active site. C163 (nucleophile) is an active-site residue.

This sequence belongs to the carbon-nitrogen hydrolase superfamily. Nitrilase family. Oligomer of dimers, forming left-handed helical fibers.

The enzyme catalyses formamide = hydrogen cyanide + H2O. In terms of biological role, catalyzes the hydration of cyanide to formamide. Degradation of cyanide may be important for plant pathogenic fungi in infection of cyanogenic plants. Also has low but significant nitrilase activity with acetonitrile, propionitrile and benzonitrile. This is Cyanide hydratase from Gibberella baccata (Fusarium lateritium).